The chain runs to 145 residues: Bacilliredoxin GK2368 (145 aa).

It belongs to the bacilliredoxin family.

This is Bacilliredoxin GK2368 from Geobacillus kaustophilus (strain HTA426).